A 249-amino-acid chain; its full sequence is DNA repair protein RecO (249 aa).

It belongs to the RecO family.

Involved in DNA repair and RecF pathway recombination. This is DNA repair protein RecO from Lawsonia intracellularis (strain PHE/MN1-00).